The sequence spans 481 residues: Adenosylhomocysteinase (481 aa).

Substrate is bound by residues Thr65, Asp140, and Glu200. 201–203 (TTT) provides a ligand contact to NAD(+). Substrate contacts are provided by Lys230 and Asp234. Residues Asn235, 264 to 269 (GYGDVG), Glu287, Asn322, 343 to 345 (IGH), and Asn393 contribute to the NAD(+) site.

The protein belongs to the adenosylhomocysteinase family. NAD(+) serves as cofactor.

The protein resides in the cytoplasm. It catalyses the reaction S-adenosyl-L-homocysteine + H2O = L-homocysteine + adenosine. The protein operates within amino-acid biosynthesis; L-homocysteine biosynthesis; L-homocysteine from S-adenosyl-L-homocysteine: step 1/1. In terms of biological role, may play a key role in the regulation of the intracellular concentration of adenosylhomocysteine. In Polynucleobacter necessarius subsp. necessarius (strain STIR1), this protein is Adenosylhomocysteinase.